We begin with the raw amino-acid sequence, 180 residues long: Required for excision 1-B domain-containing protein (180 aa).

The tract at residues 1–23 (MITAEAASESTVPAVPGDTAATG) is disordered.

The sequence is that of Required for excision 1-B domain-containing protein from Bos taurus (Bovine).